We begin with the raw amino-acid sequence, 41 residues long: Large ribosomal subunit protein bL36 (41 aa).

Belongs to the bacterial ribosomal protein bL36 family.

The polypeptide is Large ribosomal subunit protein bL36 (Methylobacterium nodulans (strain LMG 21967 / CNCM I-2342 / ORS 2060)).